The following is a 2637-amino-acid chain: Nonribisomal peptide synthetase valB (2637 aa).

The segment at 1-376 (MADGADYTQR…KALIRSPPST (376 aa)) is condensation 1. Positions 413-803 (SQASRRPDAA…VGRRDNQIKL (391 aa)) are adenylation 1. Residues 946–1022 (PPANPPERAL…EAASEIKEPT (77 aa)) enclose the Carrier 1 domain. O-(pantetheine 4'-phosphoryl)serine is present on Ser983. The segment at 1016–1045 (SEIKEPTDASAPSPSPISRDLPLQKSNHDR) is disordered. The tract at residues 1063 to 1506 (VEAIYPCTAL…LSRADMSLLQ (444 aa)) is condensation 2. An adenylation 2 region spans residues 1524-1933 (AREVAHQRPL…EGRKDTRVKL (410 aa)). The Carrier 2 domain occupies 2078-2154 (KEVTDDQAFM…YMVSKTSVSN (77 aa)). O-(pantetheine 4'-phosphoryl)serine is present on Ser2115. The segment at 2193–2582 (ESVAPATDAQ…LWMGAYLDAA (390 aa)) is condensation 3.

The protein belongs to the NRP synthetase family.

Its pathway is secondary metabolite biosynthesis. Nonribisomal peptide synthetase; part of the gene cluster that mediates the biosynthesis of valactamides. The first step of the pathway is performed by the highly reducing polyketide synthase valA that produces the polyketide part of the final products. An acetyl starter unit is incorporated by the ketosynthase domain of valA, and subsequently 6 malonyl-CoA-derived ketide units are incorporated and fully reduced to their respective alkane forms by the action of the ketoreductase, dehydratase, and enoylreductase domains (except for the penultimate unit, which is reduced only to the alkene). The final five ketide units are each proposed to be alpha-methylated by the methyltransferase domain before ketone reduction by the ketoreductase domain. The C1 domain of the nonribisomal peptide synthetase valB then catalyzes amide bond formation between the heptaketide chain and L-valine (L-Val) attached to the T1 domain. The C2 domain incorporating L-isoleucine (L-Ile) then carries out chain elongation, which is followed by macrolactonization by the Ct domain to release the final product. The protein is Nonribisomal peptide synthetase valB of Aspergillus terreus.